Reading from the N-terminus, the 171-residue chain is Ribosome maturation factor RimP (171 aa).

It belongs to the RimP family.

It localises to the cytoplasm. Functionally, required for maturation of 30S ribosomal subunits. The chain is Ribosome maturation factor RimP from Anaeromyxobacter sp. (strain Fw109-5).